The following is a 685-amino-acid chain: Threonine--tRNA ligase (685 aa).

The interval 1 to 28 (MTSPAPEHSAAPLRVPAGTTAGTAVREA) is disordered. The TGS domain maps to 1–65 (MTSPAPEHSA…EVDVDVEPVA (65 aa)). The tract at residues 262-568 (DHRKLGTELD…LTEHYAGAFP (307 aa)) is catalytic. C367, H418, and H545 together coordinate Zn(2+).

Belongs to the class-II aminoacyl-tRNA synthetase family. As to quaternary structure, homodimer. Zn(2+) serves as cofactor.

The protein resides in the cytoplasm. The enzyme catalyses tRNA(Thr) + L-threonine + ATP = L-threonyl-tRNA(Thr) + AMP + diphosphate + H(+). Catalyzes the attachment of threonine to tRNA(Thr) in a two-step reaction: L-threonine is first activated by ATP to form Thr-AMP and then transferred to the acceptor end of tRNA(Thr). Also edits incorrectly charged L-seryl-tRNA(Thr). The chain is Threonine--tRNA ligase from Rhodococcus erythropolis (strain PR4 / NBRC 100887).